The sequence spans 171 residues: Transcription factor E (171 aa).

Residues 5–88 form the HTH TFE/IIEalpha-type domain; that stretch reads YEDPFIRIAV…RWRSRREEVE (84 aa).

Belongs to the TFE family. Monomer. Interaction with RNA polymerase subunits RpoF and RpoE is necessary for Tfe stimulatory transcription activity. Able to interact with Tbp and RNA polymerase in the absence of DNA promoter. Interacts both with the preinitiation and elongation complexes.

Transcription factor that plays a role in the activation of archaeal genes transcribed by RNA polymerase. Facilitates transcription initiation by enhancing TATA-box recognition by TATA-box-binding protein (Tbp), and transcription factor B (Tfb) and RNA polymerase recruitment. Not absolutely required for transcription in vitro, but particularly important in cases where Tbp or Tfb function is not optimal. It dynamically alters the nucleic acid-binding properties of RNA polymerases by stabilizing the initiation complex and destabilizing elongation complexes. Seems to translocate with the RNA polymerase following initiation and acts by binding to the non template strand of the transcription bubble in elongation complexes. The protein is Transcription factor E of Cenarchaeum symbiosum (strain A).